Consider the following 688-residue polypeptide: Phosphoinositide 3-phosphatase (688 aa).

The Myotubularin phosphatase domain occupies 155-637 (SWDIYDPIKE…KKVQWWWQLY (483 aa)). The active-site Phosphocysteine intermediate is cysteine 397. Positions 647–668 (ELRHKRDSVPISVDKKSKEHSN) are enriched in basic and acidic residues. The interval 647–672 (ELRHKRDSVPISVDKKSKEHSNSDGG) is disordered.

It belongs to the protein-tyrosine phosphatase family. Non-receptor class myotubularin subfamily.

Its subcellular location is the cytoplasm. It carries out the reaction a 1,2-diacyl-sn-glycero-3-phospho-(1D-myo-inositol-3-phosphate) + H2O = a 1,2-diacyl-sn-glycero-3-phospho-(1D-myo-inositol) + phosphate. Its function is as follows. Lipid phosphatase which dephosphorylates phosphatidylinositol 3-monophosphate (PI3P). Involved in the control of PI3P-dependent signaling and in the maintenance of endosomal system integrity. This is Phosphoinositide 3-phosphatase from Saccharomyces cerevisiae (strain ATCC 204508 / S288c) (Baker's yeast).